The primary structure comprises 4069 residues: MASRDSNHAGESFLGSDGDEEATRELETEEESEGEEDETAAESEEEPDSRLSDQDEEGKIKQEYIISDPSFSMVTVQREDSGITWETNSSRSSTPWASEESQTSGVCSREGSTVNSPPGNVSFIVDEVKKVRKRTHKSKHGSPSLRRKGNRKRNSFESQDVPTNKKGSPLTSASQVLTTEKEKSYTGIYDKARKKKTTSNTPPITGAIYKEHKPLVLRPVYIGTVQYKIKMFNSVKEELIPLQFYGTLPKGYVIKEIHYRKGKDASISLEPDLDNSGSNTVSKTRKLVAQSIEDKVKEVFPPWRGALSKGSESLTLMFSHEDQKKIYADSPLNATSALEHTVPSYSSSGRAEQGIQLRHSQSVPQQPEDEAKPHEVEPPSVTPDTPATMFLRTTKEECELASPGTAASENDSSVSPSFANEVKKEDVYSAHHSISLEAASPGLAASTQDGLDPDQEQPDLTSIERAEPVSAKLTPTHPSVKGEKEENMLEPSISLSEPLMLEEPEKEEIETSLPIAITPEPEDSNLVEEEIVELDYPESPLVSEKPFPPHMSPEVEHKEEELILPLLAASSPEHVALSEEEREEIASVSTGSAFVSEYSVPQDLNHELQEQEGEPVPPSNVEAIAEHAVLSEEENEEFEAYSPAAAPTSESSLSPSTTEKTSENQSPLFSTVTPEYMVLSGDEASESGCYTPDSTSASEYSVPSLATKESLKKTIDRKSPLILKGVSEYMIPSEEKEDTGSFTPAVAPASEPSLSPSTTEKTSECQSPLPSTATSEHVVPSEGEDLGSERFTPDSKLISKYAAPLNATQESQKKIINEASQFKPKGISEHTVLSVDGKEVIGPSSPDLVVASEHSFPPHTTEMTSECQAPPLSATPSEYVVLSDEEAVELERYTPSSTSASEFSVPPYATPEAQEEEIVHRSLNLKGASSPMNLSEEDQEDIGPFSPDSAFVSEFSFPPYATQEAEKREFECDSPICLTSPSEHTILSDEDTEEAELFSPDSASQVSIPPFRISETEKNELEPDSLLTAVSASGYSCFSEADEEDIGSTAATPVSEQFSSSQKQKAETFPLMSPLEDLSLPPSTDKSEKAEIKPEIPTTSTSVSEYLILAQKQKTQAYLEPESEDLIPSHLTSEVEKGEREASSSVAAIPAALPAQSSIVKEETKPASPHSVLPDSVPAIKKEQEPTAALTLKAADEQMALSKVRKEEIVPDSQEATAHVSQDQKMEPQPPNVPESEMKYSVLPDMVDEPKKGVKPKLVLNVTSELEQRKLSKNEPEVIKPYSPLKETSLSGPEALSAVKMEMKHDSKITTTPIVLHSASSGVEKQVEHGPPALAFSALSEEIKKEIEPSSSTTTASVTKLDSNLTRAVKEEIPTDSSLITPVDRPVLTKVGKGELGSGLPPLVTSADEHSVLAEEDKVAIKGASPIETSSKHLAWSEAEKEIKFDSLPSVSSIAEHSVLSEVEAKEVKAGLPVIKTSSSQHSDKSEEARVEDKQDLLFSTVCDSERLVSSQKKSLMSTSEVLEPEHELPLSLWGEIKKKETELPSSQNVSPASKHIIPKGKDEETASSSPELENLASGLAPTLLLLSDDKNKPAVEVSSTAQGDFPSEKQDVALAELSLEPEKKDKPHQPLELPNAGSEFSSDLGRQSGSIGTKQAKSPITETEDSVLEKGPAELRSREGKEENRELCASSTMPAISELSSLLREESQNEEIKPFSPKIISLESKEPPASVAEGGNPEEFQPFTFSLKGLSEEVSHPADFKKGGNQEIGPLPPTGNLKAQVMGDILDKLSEETGHPNSSQVLQSITEPSKIAPSDLLVEQKKTEKALHSDQTVKLPDVSTSSEDKQDLGIKQFSLMRENLPLEQSKSFMTTKPADVKETKMEEFFISPKDENWMLGKPENVASQHEQRIAGSVQLDSSSSNELRPGQLKAAVSSKDHTCEVRKQVLPHSAEESHLSSQEAVSALDTSSGNTETLSSKSYSSEEVKLAEEPKSLVLAGNVERNIAEGKEIHSLMESESLLLEKANTELSWPSKEDSQEKIKLPPERFFQKPVSGLSVEQVKSETISSSVKTAHFPAEGVEPALGNEKEAHRSTPPFPEEKPLEESKMVQSKVIDDADEGKKPSPEVKIPTQRKPISSIHAREPQSPESPEVTQNPPTQPKVAKPDLPEEKGKKGISSFKSWMSSLFFGSSTPDNKVAEQEDLETQPSPSVEKAVTVIDPEGTIPTNFNVAEKPADHSLSEVKLKTADEPRGTLVKSGDGQNVKEKSMILSNVEDLQQPKFISEVSREDYGKKEISGDSEEMNINSVVTSADGENLEIQSYSLIGEKLVMEEAKTIVPPHVTDSKRVQKPAIAPPSKWNISIFKEEPRSDQKQKSLLSFDVVDKVPQQPKSASSNFASKNITKESEKPESIILPVEESKGSLIDFSEDRLKKEMQNPTSLKISEEETKLRSVSPTEKKDNLENRSYTLAEKKVLAEKQNSVAPLELRDSNEIGKTQITLGSRSTELKESKADAMPQHFYQNEDYNERPKIIVGSEKEKGEEKENQVYVLSEGKKQQEHQPYSVNVAESMSRESDISLGHSLGETQSFSLVKATSVTEKSEAMLAEAHPEIREAKAVGTQPHPLEESKVLVEKTKTFLPVALSCRDEIENHSLSQEGNLVLEKSSRDMPDHSEEKEQFRESELSKGGSVDITKETVKQGFQEKAVGTQPRPLEESKVLVEKTKTFLPVVLSCHDEIENHSLSQEGNLVLEKSSRDMPDHSEEKEQFKESELWKGGSVDITKESMKEGFPSKESERTLARPFDETKSSETPPYLLSPVKPQTLASGASPEINAVKKKEMPRSELTPERHTVHTIQTSKDDTSDVPKQSVLVSKHHLEAAEDTRVKEPLSSAKSNYAQFISNTSASNADKMVSNKEMPKEPEDTYAKGEDFTVTSKPAGLSEDQKTAFSIISEGCEILNIHAPAFISSIDQEESEQMQDKLEYLEEKASFKTIPLPDDSETVACHKTLKSRLEDEKVTPLKENKQKETHKTKEEISTDSETDLSFIQPTIPSEEDYFEKYTLIDYNISPDPEKQKAPQKLNVEEKLSKEVTEETISFPVSSVESALEHEYDLVKLDESFYGPEKGHNILSHPETQSQNSADRNVSKDTKRDVDSKSPGMPLFEAEEGVLSRTQIFPTTIKVIDPEFLEEPPALAFLYKDLYEEAVGEKKKEEETASEGDSVNSEASFPSRNSDTDDGTGIYFEKYILKDDILHDTSLTQKDQGQGLEEKRVGKDDSYQPIAAEGEIWGKFGTICREKSLEEQKGVYGEGESVDHVETVGNVAMQKKAPITEDVRVATQKISYAVPFEDTHHVLERADEAGSHGNEVGNASPEVNLNVPVQVSFPEEEFASGATHVQETSLEEPKILVPPEPSEERLRNSPVQDEYEFTESLHNEVVPQDILSEELSSESTPEDVLSQGKESFEHISENEFASEAEQSTPAEQKELGSERKEEDQLSSEVVTEKAQKELKKSQIDTYCYTCKCPISATDKVFGTHKDHEVSTLDTAISAVKVQLAEFLENLQEKSLRIEAFVSEIESFFNTIEENCSKNEKRLEEQNEEMMKKVLAQYDEKAQSFEEVKKKKMEFLHEQMVHFLQSMDTAKDTLETIVREAEELDEAVFLTSFEEINERLLSAMESTASLEKMPAAFSLFEHYDDSSARSDQMLKQVAVPQPPRLEPQEPNSATSTTIAVYWSMNKEDVIDSFQVYCMEEPQDDQEVNELVEEYRLTVKESYCIFEDLEPDRCYQVWVMAVNFTGCSLPSERAIFRTAPSTPVIRAEDCTVCWNTATIRWRPTTPEATETYTLEYCRQHSPEGEGLRSFSGIKGLQLKVNLQPNDNYFFYVRAINAFGTSEQSEAALISTRGTRFLLLRETAHPALHISSSGTVISFGERRRLTEIPSVLGEELPSCGQHYWETTVTDCPAYRLGICSSSAVQAGALGQGETSWYMHCSEPQRYTFFYSGIVSDVHVTERPARVGILLDYNNQRLIFINAESEQLLFIIRHRFNEGVHPAFALEKPGKCTLHLGIEPPDSVRHK.

Disordered stretches follow at residues 1-177 (MASR…SQVL), 341-387 (TVPS…DTPA), 442-525 (GLAA…EDSN), 538-558 (ESPL…VEHK), 597-705 (EYSV…VPSL), 732-793 (PSEE…RFTP), 844-872 (SSPD…APPL), 890-948 (LERY…FSPD), 979-1009 (TSPS…VSIP), 1041-1097 (ADEE…PEIP), 1160-1179 (VKEE…SVPA), 1205-1237 (RKEE…PESE), 1540-1575 (KETE…ELEN), 1594-1742 (PAVE…EEFQ), 1757-1809 (HPAD…ITEP), 1892-1988 (ENWM…VKLA), 2064-2175 (TISS…KKGI), 2187-2259 (FGSS…SGDG), 2385-2412 (PQQP…SIIL), 2425-2463 (SEDR…LENR), 2494-2527 (TQIT…NERP), 2653-2706 (QEGN…VGTQ), and 2750-2862 (SSRD…SDVP). Residues 27 to 47 (ETEEESEGEEDETAAESEEEP) are compositionally biased toward acidic residues. Basic and acidic residues predominate over residues 48 to 62 (DSRLSDQDEEGKIKQ). The span at 84–119 (TWETNSSRSSTPWASEESQTSGVCSREGSTVNSPPG) shows a compositional bias: polar residues. The span at 130-153 (KVRKRTHKSKHGSPSLRRKGNRKR) shows a compositional bias: basic residues. A Phosphoserine modification is found at Ser155. Polar residues-rich tracts occupy residues 156–177 (FESQ…SQVL) and 341–350 (TVPSYSSSGR). Residues 489-499 (LEPSISLSEPL) show a composition bias toward low complexity. Acidic residues predominate over residues 500-510 (MLEEPEKEEIE). Phosphoserine is present on Ser631. Over residues 640 to 659 (AYSPAAAPTSESSLSPSTTE) the composition is skewed to low complexity. Composition is skewed to polar residues over residues 664-673 (NQSPLFSTVT), 692-701 (PDSTSASEYS), and 752-775 (PSLS…TATS). Positions 1049-1063 (TAATPVSEQFSSSQK) are enriched in polar residues. Residues 1085 to 1094 (DKSEKAEIKP) show a composition bias toward basic and acidic residues. Polar residues predominate over residues 1214–1223 (QEATAHVSQD). Positions 1621–1630 (EPEKKDKPHQ) are enriched in basic and acidic residues. Polar residues predominate over residues 1639 to 1662 (SEFSSDLGRQSGSIGTKQAKSPIT). 3 stretches are compositionally biased toward basic and acidic residues: residues 1668–1687 (VLEK…ENRE), 1704–1714 (LREESQNEEIK), and 1786–1795 (ILDKLSEETG). Residues 1796 to 1808 (HPNSSQVLQSITE) are compositionally biased toward polar residues. Residues 1935–1955 (SKDHTCEVRKQVLPHSAEESH) are compositionally biased toward basic and acidic residues. A compositionally biased stretch (polar residues) spans 1956–1980 (LSSQEAVSALDTSSGNTETLSSKSY). Positions 2085 to 2124 (NEKEAHRSTPPFPEEKPLEESKMVQSKVIDDADEGKKPSP) are enriched in basic and acidic residues. The segment covering 2145–2155 (SPESPEVTQNP) has biased composition (polar residues). 2 stretches are compositionally biased toward basic and acidic residues: residues 2162 to 2172 (AKPDLPEEKGK) and 2232 to 2250 (KPAD…DEPR). The segment covering 2387–2399 (QPKSASSNFASKN) has biased composition (polar residues). Ser2404 is subject to Phosphoserine. Residues 2441 to 2461 (ISEEETKLRSVSPTEKKDNLE) are compositionally biased toward basic and acidic residues. Basic and acidic residues-rich tracts occupy residues 2661-2681 (KSSR…ESEL), 2750-2769 (SSRD…ESEL), and 2777-2804 (ITKE…ETKS). A Phosphoserine modification is found at Ser2813. Positions 2830-2847 (AVKKKEMPRSELTPERHT) are enriched in basic and acidic residues. Residues 2964-2988 (SIDQEESEQMQDKLEYLEEKASFKT) are a coiled coil. Positions 3015 to 3031 (PLKENKQKETHKTKEEI) are enriched in basic and acidic residues. Disordered stretches follow at residues 3015–3037 (PLKE…DSET), 3119–3156 (EKGH…PGMP), 3204–3231 (KKKE…SDTD), 3386–3421 (SGAT…QDEY), and 3465–3495 (EFAS…SSEV). Positions 3052–3365 (YFEKYTLIDY…GSHGNEVGNA (314 aa)) are required for RYR2 clustering. Positions 3128–3138 (PETQSQNSADR) are enriched in polar residues. A compositionally biased stretch (basic and acidic residues) spans 3139 to 3150 (NVSKDTKRDVDS). A compositionally biased stretch (polar residues) spans 3213–3227 (EGDSVNSEASFPSRN). A Phosphoserine modification is found at Ser3228. The span at 3477–3489 (EQKELGSERKEED) shows a compositional bias: basic and acidic residues. The segment at 3517 to 3544 (KCPISATDKVFGTHKDHEVSTLDTAISA) is amphipathic helix H1. Residues 3544-3653 (AVKVQLAEFL…REAEELDEAV (110 aa)) are a coiled coil. The segment at 3545–3672 (VKVQLAEFLE…ERLLSAMEST (128 aa)) is B-box coiled-coil; BBC. Residues 3631–3648 (SMDTAKDTLETIVREAEE) are amphipathic helix H2. Fibronectin type-III domains follow at residues 3704–3805 (VPQP…TAPS) and 3806–3898 (TPVI…TRGT). Positions 3751-3767 (EVNELVEEYRLTVKESY) are amphipathic helix H3. Positions 3880–4065 (NAFGTSEQSE…LHLGIEPPDS (186 aa)) constitute a B30.2/SPRY domain.

Interacts with PRKAR2A. Interacts with ACTN2 and DTNBP1/dysbindin. Interacts with DES. Interacts with DMD/dystrophin. Interacts with the calcineurin catalytic subunit PPP3CA. Interacts with TTN. Interacts with CAPN3; this interaction, which results in CMYA5 proteolysis, may protect CAPN3 from autolysis. Interacts with FSD2. Identified in a complex composed of FSD2, CMYA5 and RYR2. Post-translationally, phosphorylated by PKA. Expressed in skeletal muscle; at a strong level and in heart.

It is found in the nucleus. The protein resides in the sarcoplasmic reticulum. The protein localises to the cytoplasm. It localises to the perinuclear region. Its subcellular location is the myofibril. It is found in the sarcomere. The protein resides in the m line. Its function is as follows. May serve as an anchoring protein that mediates the subcellular compartmentation of protein kinase A (PKA) via binding to PRKAR2A. May function as a repressor of calcineurin-mediated transcriptional activity. May attenuate calcineurin ability to induce slow-fiber gene program in muscle and may negatively modulate skeletal muscle regeneration. Plays a role in the assembly of ryanodine receptor (RYR2) clusters in striated muscle. The sequence is that of Cardiomyopathy-associated protein 5 (CMYA5) from Homo sapiens (Human).